A 386-amino-acid polypeptide reads, in one-letter code: Succinate--CoA ligase [ADP-forming] subunit beta (386 aa).

The region spanning Lys-9 to Glu-244 is the ATP-grasp domain. ATP is bound by residues Lys-46, Gly-53–Gly-55, Glu-99, Cys-102, and Glu-107. The Mg(2+) site is built by Asn-199 and Asp-213. Residues Asn-264 and Gly-321 to Met-323 each bind substrate.

It belongs to the succinate/malate CoA ligase beta subunit family. Heterotetramer of two alpha and two beta subunits. It depends on Mg(2+) as a cofactor.

The enzyme catalyses succinate + ATP + CoA = succinyl-CoA + ADP + phosphate. The catalysed reaction is GTP + succinate + CoA = succinyl-CoA + GDP + phosphate. It functions in the pathway carbohydrate metabolism; tricarboxylic acid cycle; succinate from succinyl-CoA (ligase route): step 1/1. Succinyl-CoA synthetase functions in the citric acid cycle (TCA), coupling the hydrolysis of succinyl-CoA to the synthesis of either ATP or GTP and thus represents the only step of substrate-level phosphorylation in the TCA. The beta subunit provides nucleotide specificity of the enzyme and binds the substrate succinate, while the binding sites for coenzyme A and phosphate are found in the alpha subunit. The protein is Succinate--CoA ligase [ADP-forming] subunit beta of Bacillus mycoides (strain KBAB4) (Bacillus weihenstephanensis).